Here is a 513-residue protein sequence, read N- to C-terminus: Protein CYCLOPS (513 aa).

Residues 327–435 are disordered; it reads QIHGGTASGE…ERSRKMAEAK (109 aa). Low complexity predominate over residues 334–347; that stretch reads SGEPSQSESSAAAP. Positions 359–381 are enriched in polar residues; it reads PSNSSQTLCDSSWKQVGESTQNR. Residues 384–396 are compositionally biased toward basic and acidic residues; it reads GVREQIMDNLKDD. Short sequence motifs (nuclear localization signal) lie at residues 397–401 and 421–424; these read RKRKR and KKRR. Residues 447–513 adopt a coiled-coil conformation; that stretch reads MQAVMKRCEN…ERLLSETGKI (67 aa).

The protein belongs to the CYCLOPS family.

The protein resides in the nucleus. Functionally, involved symbiotic signaling. Required for root infection by symbiotic rhizobia, infection thread (IT) formation, and nodule development. Required for symbiosome formation (i.e. the release of the bacteria from the ITs) and subsequent symbiosome development. Involved in arbuscular mycorrhizal (AM) symbiosis. The sequence is that of Protein CYCLOPS from Pisum sativum (Garden pea).